The chain runs to 426 residues: 3-phosphoshikimate 1-carboxyvinyltransferase (426 aa).

3-phosphoshikimate is bound by residues Lys-22, Ser-23, and Arg-27. Lys-22 provides a ligand contact to phosphoenolpyruvate. Positions 96 and 124 each coordinate phosphoenolpyruvate. 7 residues coordinate 3-phosphoshikimate: Ser-170, Ser-171, Gln-172, Ser-198, Asp-314, Asn-337, and Lys-341. Residue Gln-172 coordinates phosphoenolpyruvate. The active-site Proton acceptor is Asp-314. Arg-345, Arg-387, and Lys-412 together coordinate phosphoenolpyruvate.

Belongs to the EPSP synthase family. In terms of assembly, monomer.

The protein localises to the cytoplasm. It catalyses the reaction 3-phosphoshikimate + phosphoenolpyruvate = 5-O-(1-carboxyvinyl)-3-phosphoshikimate + phosphate. Its pathway is metabolic intermediate biosynthesis; chorismate biosynthesis; chorismate from D-erythrose 4-phosphate and phosphoenolpyruvate: step 6/7. In terms of biological role, catalyzes the transfer of the enolpyruvyl moiety of phosphoenolpyruvate (PEP) to the 5-hydroxyl of shikimate-3-phosphate (S3P) to produce enolpyruvyl shikimate-3-phosphate and inorganic phosphate. The sequence is that of 3-phosphoshikimate 1-carboxyvinyltransferase from Aliivibrio fischeri (strain MJ11) (Vibrio fischeri).